The sequence spans 184 residues: MSAPSLNDLIELGAISEAQGLRGQVKIRPHSSEPVALLSSKSVWLSLIPRRDAGLSSPVEQASLTQYKVKSAKMHSGNVVIALEGVTDRDQALALKGARILVARDAFPKVETDSYYWIDLIGCNAINLQNETLGEVIDVTENGAHGVIAIGDASTKTIQYLVPFVKQVVQDVDLSNKTISLDWQ.

One can recognise a PRC barrel domain in the interval 112-184 (TDSYYWIDLI…SNKTISLDWQ (73 aa)).

The protein belongs to the RimM family. As to quaternary structure, binds ribosomal protein uS19.

It localises to the cytoplasm. An accessory protein needed during the final step in the assembly of 30S ribosomal subunit, possibly for assembly of the head region. Essential for efficient processing of 16S rRNA. May be needed both before and after RbfA during the maturation of 16S rRNA. It has affinity for free ribosomal 30S subunits but not for 70S ribosomes. This chain is Ribosome maturation factor RimM, found in Polynucleobacter necessarius subsp. necessarius (strain STIR1).